The sequence spans 57 residues: MEPLTLLIIIGGVILGNELIISLSRSYRLHNHKMAYRKHKHKTQENYETFASDKKRT.

A helical membrane pass occupies residues 3–23 (PLTLLIIIGGVILGNELIISL). The interval 38–57 (KHKHKTQENYETFASDKKRT) is disordered.

The protein resides in the host membrane. This is an uncharacterized protein from Acidianus bottle-shaped virus (isolate Italy/Pozzuoli) (ABV).